A 578-amino-acid polypeptide reads, in one-letter code: PTS system fructose-specific EIIB'BC component (578 aa).

PTS EIIB type-2 domains follow at residues 1 to 99 (MSKI…EALA) and 119 to 214 (VVAI…AALA). C125 serves as the catalytic Phosphocysteine intermediate; for EIIB activity. At C125 the chain carries Phosphocysteine; by EIIA. Positions 241-576 (PYMHLLTGVS…KKPIPAEERA (336 aa)) constitute a PTS EIIC type-2 domain. Transmembrane regions (helical) follow at residues 251–271 (YMLP…VFGI), 284–304 (LMAI…AGFI), 319–339 (IGGM…VAGF), 364–384 (VLIL…YVVG), 405–425 (NAVV…GGPI), 428–450 (AAYT…AVMA), 477–497 (AGGA…IPFA), 518–538 (LSMA…VLAI), and 545–565 (LGLY…LLIA).

Its subcellular location is the cell inner membrane. It catalyses the reaction D-fructose(out) + N(pros)-phospho-L-histidyl-[protein] = D-fructose 1-phosphate(in) + L-histidyl-[protein]. The phosphoenolpyruvate-dependent sugar phosphotransferase system (sugar PTS), a major carbohydrate active transport system, catalyzes the phosphorylation of incoming sugar substrates concomitantly with their translocation across the cell membrane. The enzyme II FruAB PTS system is involved in fructose transport. The chain is PTS system fructose-specific EIIB'BC component from Rhodobacter capsulatus (Rhodopseudomonas capsulata).